The chain runs to 212 residues: Octanoyltransferase (212 aa).

The BPL/LPL catalytic domain occupies 31–209 (AETQDEIWLV…HFADLLGYNI (179 aa)). Substrate contacts are provided by residues 70–77 (RGGQITYH), 138–140 (SLG), and 151–153 (GLA). Cys169 acts as the Acyl-thioester intermediate in catalysis.

This sequence belongs to the LipB family.

Its subcellular location is the cytoplasm. It catalyses the reaction octanoyl-[ACP] + L-lysyl-[protein] = N(6)-octanoyl-L-lysyl-[protein] + holo-[ACP] + H(+). It functions in the pathway protein modification; protein lipoylation via endogenous pathway; protein N(6)-(lipoyl)lysine from octanoyl-[acyl-carrier-protein]: step 1/2. Functionally, catalyzes the transfer of endogenously produced octanoic acid from octanoyl-acyl-carrier-protein onto the lipoyl domains of lipoate-dependent enzymes. Lipoyl-ACP can also act as a substrate although octanoyl-ACP is likely to be the physiological substrate. This Haemophilus influenzae (strain PittGG) protein is Octanoyltransferase.